A 2801-amino-acid polypeptide reads, in one-letter code: Neurobeachin-like protein 2 (2801 aa).

Residues 1379-1529 (RHEEEYEEEE…TISNTSNPQA (151 aa)) are disordered. Residues 1383-1393 (EYEEEEGETQD) show a composition bias toward acidic residues. Polar residues-rich tracts occupy residues 1400-1413 (DLSQ…QLKN), 1424-1437 (GDQS…SNTV), 1470-1481 (KGPQTPVGSQPE), and 1500-1528 (SSSL…SNPQ). One can recognise a BEACH-type PH domain in the interval 1986 to 2086 (SQKEKLVLSE…VRNKVYSRIL (101 aa)). In terms of domain architecture, BEACH spans 2099 to 2391 (RSPQELLKAS…QLLKEPHPPR (293 aa)). WD repeat units follow at residues 2431-2468 (LVQA…SWLP), 2492-2535 (RFLS…MLGK), 2538-2575 (LVGR…VWQV), 2588-2626 (RPIQ…VHSV), 2633-2676 (WTLR…RYAL), 2684-2719 (TLLA…IRDL), and 2727-2762 (APLA…VGAG).

It belongs to the WD repeat neurobeachin family.

Its subcellular location is the endoplasmic reticulum. Functionally, involved in thrombopoiesis. Plays a role in the development or secretion of alpha-granules, that contain several growth factors important for platelet biogenesis. This Danio rerio (Zebrafish) protein is Neurobeachin-like protein 2 (nbeal2).